A 233-amino-acid chain; its full sequence is Preprocaerulein type-4 (233 aa).

Positions 1 to 26 (MFKGILLCVLFAVLSANPLSQPEGFA) are cleaved as a signal peptide. The propeptide occupies 27–72 (DEERDVRGLASLLGKALKATLKIGTHFLGGAPQQREANDERRFADG). The residue at position 73 (glutamine 73) is a Pyrrolidone carboxylic acid. Tyrosine 76 carries the post-translational modification Sulfotyrosine. The residue at position 82 (phenylalanine 82) is a Phenylalanine amide. Residues 86–87 (DG) constitute a propeptide that is removed on maturation. Glutamine 88 is subject to Pyrrolidone carboxylic acid. Position 91 is a sulfotyrosine (tyrosine 91). Phenylalanine 97 is subject to Phenylalanine amide. The propeptide occupies 101–151 (DDEDDVHERDVRGFGSFLGKALKAALKIGANALGGAPQQREANDERRFADG). A Pyrrolidone carboxylic acid modification is found at glutamine 152. A Sulfotyrosine modification is found at tyrosine 155. Phenylalanine 161 is modified (phenylalanine amide). The propeptide occupies 165 to 215 (DDEDDVNERDVRGFGSFLGKALKAALKIGANALGGSPQQREANDERRFADG). A disordered region spans residues 197-233 (LGGSPQQREANDERRFADGQQDYTGWMDFGRRNGEDD). Residue glutamine 216 is modified to Pyrrolidone carboxylic acid. Tyrosine 219 is modified (sulfotyrosine). Position 225 is a phenylalanine amide (phenylalanine 225). The propeptide occupies 229–233 (NGEDD).

The protein belongs to the gastrin/cholecystokinin family. Expressed by the skin glands.

It localises to the secreted. Its function is as follows. The pharmacological activities of caerulein are quite similar to the physiological activities of gastrin and related peptides. This is Preprocaerulein type-4 from Xenopus laevis (African clawed frog).